Here is a 205-residue protein sequence, read N- to C-terminus: Small ribosomal subunit protein uS4 (205 aa).

A disordered region spans residues 18–46; it reads NIWGRPKSPVNRREYGPGQHGQRRKGKLS. The S4 RNA-binding domain occupies 94–157; that stretch reads RRLDTVVFRA…KQLAIVLEAT (64 aa).

This sequence belongs to the universal ribosomal protein uS4 family. As to quaternary structure, part of the 30S ribosomal subunit. Contacts protein S5. The interaction surface between S4 and S5 is involved in control of translational fidelity.

Its function is as follows. One of the primary rRNA binding proteins, it binds directly to 16S rRNA where it nucleates assembly of the body of the 30S subunit. In terms of biological role, with S5 and S12 plays an important role in translational accuracy. The protein is Small ribosomal subunit protein uS4 of Bradyrhizobium sp. (strain BTAi1 / ATCC BAA-1182).